A 145-amino-acid chain; its full sequence is MYPAHLLLLLAVCVSLLGASAIPPLPLNLIQFTYLIECANKGRRTSFNYADYGCYCGIGGSGTPVDKLDRCCKTHDECYAQAEKKGCYPKLTMYNYYCGGGGPYCNSKTECQRFVCDCDVRAADCFARYPYNNKNYNINTSNRCK.

An N-terminal signal peptide occupies residues 1-21 (MYPAHLLLLLAVCVSLLGASA). Residues 22–27 (IPPLPL) constitute a propeptide that is removed on maturation. Disulfide bonds link Cys38/Cys98, Cys54/Cys144, Cys56/Cys72, Cys71/Cys125, Cys78/Cys118, Cys87/Cys111, and Cys105/Cys116. Positions 55, 57, and 59 each coordinate Ca(2+). Residue His75 is part of the active site. Asp76 provides a ligand contact to Ca(2+). Asp119 is a catalytic residue.

Belongs to the phospholipase A2 family. Group I subfamily. D49 sub-subfamily. It depends on Ca(2+) as a cofactor.

The protein localises to the secreted. The catalysed reaction is a 1,2-diacyl-sn-glycero-3-phosphocholine + H2O = a 1-acyl-sn-glycero-3-phosphocholine + a fatty acid + H(+). In terms of biological role, PLA2 catalyzes the calcium-dependent hydrolysis of the 2-acyl groups in 3-sn-phosphoglycerides. The protein is Basic phospholipase A2 PC16 of Laticauda laticaudata (Blue-ringed sea krait).